The chain runs to 337 residues: Large ribosomal subunit protein uL3 (337 aa).

The disordered stretch occupies residues Met-1–Arg-26.

This sequence belongs to the universal ribosomal protein uL3 family. As to quaternary structure, part of the 50S ribosomal subunit. Forms a cluster with proteins L14 and L24e.

In terms of biological role, one of the primary rRNA binding proteins, it binds directly near the 3'-end of the 23S rRNA, where it nucleates assembly of the 50S subunit. This chain is Large ribosomal subunit protein uL3, found in Methanosphaera stadtmanae (strain ATCC 43021 / DSM 3091 / JCM 11832 / MCB-3).